The following is a 184-amino-acid chain: Elongation factor P (184 aa).

It belongs to the elongation factor P family.

It is found in the cytoplasm. The protein operates within protein biosynthesis; polypeptide chain elongation. In terms of biological role, involved in peptide bond synthesis. Stimulates efficient translation and peptide-bond synthesis on native or reconstituted 70S ribosomes in vitro. Probably functions indirectly by altering the affinity of the ribosome for aminoacyl-tRNA, thus increasing their reactivity as acceptors for peptidyl transferase. The protein is Elongation factor P of Verminephrobacter eiseniae (strain EF01-2).